The primary structure comprises 353 residues: Quinolinate synthase (353 aa).

Positions 47 and 68 each coordinate iminosuccinate. Cys113 is a binding site for [4Fe-4S] cluster. Iminosuccinate contacts are provided by residues 139-141 (YAN) and Ser156. [4Fe-4S] cluster is bound at residue Cys200. Iminosuccinate-binding positions include 226-228 (HPE) and Thr243. Cys297 serves as a coordination point for [4Fe-4S] cluster.

It belongs to the quinolinate synthase family. Type 1 subfamily. Requires [4Fe-4S] cluster as cofactor.

It is found in the cytoplasm. The enzyme catalyses iminosuccinate + dihydroxyacetone phosphate = quinolinate + phosphate + 2 H2O + H(+). The protein operates within cofactor biosynthesis; NAD(+) biosynthesis; quinolinate from iminoaspartate: step 1/1. Its function is as follows. Catalyzes the condensation of iminoaspartate with dihydroxyacetone phosphate to form quinolinate. This Vibrio vulnificus (strain YJ016) protein is Quinolinate synthase.